A 197-amino-acid chain; its full sequence is Ribosome maturation factor RimP (197 aa).

Belongs to the RimP family.

The protein resides in the cytoplasm. Its function is as follows. Required for maturation of 30S ribosomal subunits. This Acidovorax sp. (strain JS42) protein is Ribosome maturation factor RimP.